We begin with the raw amino-acid sequence, 628 residues long: Translation factor GUF1, mitochondrial (628 aa).

The 183-residue stretch at 27–209 folds into the tr-type G domain; sequence LPSRNFSIIA…AIISRIPPPS (183 aa). Residues 36–43, 102–106, and 156–159 each bind GTP; these read AHIDHGKS, DTPGH, and NKID.

The protein belongs to the TRAFAC class translation factor GTPase superfamily. Classic translation factor GTPase family. LepA subfamily.

It localises to the mitochondrion inner membrane. It carries out the reaction GTP + H2O = GDP + phosphate + H(+). Its function is as follows. Promotes mitochondrial protein synthesis. May act as a fidelity factor of the translation reaction, by catalyzing a one-codon backward translocation of tRNAs on improperly translocated ribosomes. Binds to mitochondrial ribosomes in a GTP-dependent manner. The chain is Translation factor GUF1, mitochondrial from Laccaria bicolor (strain S238N-H82 / ATCC MYA-4686) (Bicoloured deceiver).